A 499-amino-acid polypeptide reads, in one-letter code: Serine carboxypeptidase-like 34 (499 aa).

Residues 1-25 (MGSHSVEFSVLVLFLVSFLLGSTSA) form the signal peptide. N-linked (GlcNAc...) asparagine glycosylation is found at N73, N124, and N158. Intrachain disulfides connect C106–C383, C269–C280, and C304–C351. The active site involves S200. Residues N310, N372, and N375 are each glycosylated (N-linked (GlcNAc...) asparagine). Residues D419 and H471 contribute to the active site.

Belongs to the peptidase S10 family. As to expression, ubiquitous.

Its subcellular location is the secreted. Functionally, probable carboxypeptidase. In Arabidopsis thaliana (Mouse-ear cress), this protein is Serine carboxypeptidase-like 34 (SCPL34).